Here is a 277-residue protein sequence, read N- to C-terminus: Diaminopimelate epimerase (277 aa).

Substrate-binding residues include Asn-13, Gln-46, and Asn-66. Residue Cys-75 is the Proton donor of the active site. Residues 76-77, Asn-159, Asn-192, and 210-211 each bind substrate; these read GN and ER. Catalysis depends on Cys-219, which acts as the Proton acceptor. 220-221 contacts substrate; that stretch reads GT.

It belongs to the diaminopimelate epimerase family. As to quaternary structure, homodimer.

It is found in the cytoplasm. It catalyses the reaction (2S,6S)-2,6-diaminopimelate = meso-2,6-diaminopimelate. Its pathway is amino-acid biosynthesis; L-lysine biosynthesis via DAP pathway; DL-2,6-diaminopimelate from LL-2,6-diaminopimelate: step 1/1. Its function is as follows. Catalyzes the stereoinversion of LL-2,6-diaminopimelate (L,L-DAP) to meso-diaminopimelate (meso-DAP), a precursor of L-lysine and an essential component of the bacterial peptidoglycan. This Aromatoleum aromaticum (strain DSM 19018 / LMG 30748 / EbN1) (Azoarcus sp. (strain EbN1)) protein is Diaminopimelate epimerase.